Reading from the N-terminus, the 166-residue chain is Endoribonuclease YbeY (166 aa).

Zn(2+) contacts are provided by His-132, His-136, and His-142.

The protein belongs to the endoribonuclease YbeY family. Zn(2+) serves as cofactor.

The protein localises to the cytoplasm. Its function is as follows. Single strand-specific metallo-endoribonuclease involved in late-stage 70S ribosome quality control and in maturation of the 3' terminus of the 16S rRNA. This chain is Endoribonuclease YbeY, found in Clostridium acetobutylicum (strain ATCC 824 / DSM 792 / JCM 1419 / IAM 19013 / LMG 5710 / NBRC 13948 / NRRL B-527 / VKM B-1787 / 2291 / W).